Here is a 21-residue protein sequence, read N- to C-terminus: Cupiennin-6d (21 aa).

Ser21 is modified (serine amide).

In terms of tissue distribution, expressed by the venom gland.

It is found in the secreted. This Cupiennius salei (American wandering spider) protein is Cupiennin-6d.